Consider the following 143-residue polypeptide: Myosin 1 light chain cam2 (143 aa).

3 EF-hand domains span residues Glu6–Asn41, Glu75–Lys110, and Leu111–Lys143.

Belongs to the calmodulin family. Interacts with myo1 and pik1.

The protein resides in the cytoplasm. It is found in the prospore membrane. Functionally, plays a role in meiosis and sporulation. This chain is Myosin 1 light chain cam2, found in Schizosaccharomyces pombe (strain 972 / ATCC 24843) (Fission yeast).